The following is a 936-amino-acid chain: DNA topoisomerase 1 (936 aa).

In terms of domain architecture, Toprim spans 15–139 (RRLVIVESPT…VKRMVFHEIT (125 aa)). Positions 21 and 108 each coordinate Mg(2+). The 458-residue stretch at 154–611 (DIALVDAQET…FYFGGEHGVE (458 aa)) folds into the Topo IA-type catalytic domain. The segment at 188–193 (SAGRVQ) is interaction with DNA. Catalysis depends on Y339, which acts as the O-(5'-phospho-DNA)-tyrosine intermediate. Disordered stretches follow at residues 661 to 688 (LERM…LTPD), 732 to 767 (VLPE…SLFR), 841 to 884 (KRRG…ETNA), and 903 to 936 (LLAD…AKKA). Basic residues predominate over residues 910–936 (RGPVKKKAPAKKAAKKAPAKKAAAKKA).

Belongs to the type IA topoisomerase family. As to quaternary structure, monomer. Mg(2+) serves as cofactor.

The catalysed reaction is ATP-independent breakage of single-stranded DNA, followed by passage and rejoining.. Its function is as follows. Releases the supercoiling and torsional tension of DNA, which is introduced during the DNA replication and transcription, by transiently cleaving and rejoining one strand of the DNA duplex. Introduces a single-strand break via transesterification at a target site in duplex DNA. The scissile phosphodiester is attacked by the catalytic tyrosine of the enzyme, resulting in the formation of a DNA-(5'-phosphotyrosyl)-enzyme intermediate and the expulsion of a 3'-OH DNA strand. The free DNA strand then undergoes passage around the unbroken strand, thus removing DNA supercoils. Finally, in the religation step, the DNA 3'-OH attacks the covalent intermediate to expel the active-site tyrosine and restore the DNA phosphodiester backbone. Relaxes negatively (but not positively) supercoiled DNA, concatanates and knots circular ssDNA at 52 but not 37 degrees Celsius. Preferentially nicks supercoiled DNA at C(G/T)CTT, cutting between the TT residues, binds ss and dsDNA with the recognition site. This is DNA topoisomerase 1 from Mycolicibacterium smegmatis (strain ATCC 700084 / mc(2)155) (Mycobacterium smegmatis).